The primary structure comprises 278 residues: MKRILVVSGLSGAGKSTVARVLEDIGFFCIDNLPPALLNDFMVLLSSSSIDKVALVVDIRSAQLGNAVQAIKKLVDNYSNIVTVLFLEASDEELLKRFATTRRRHPLEGQLSLQEAISKEKELLRDMKEMSVVIDTTGLDIHTLREKIGSLLKEEAQFVIRIRSFGFKYGLPADTDFIIDTRFLPNPYYDRKLAQLNGTDQEIVNFFSKYPVVEDFIQYTYKLLHIAATRYKSEGRPFMTVSIGCTGGRHRSVYVAEKLSKILKDRFYVYVEHRDVNK.

9-16 provides a ligand contact to ATP; that stretch reads GLSGAGKS. GTP is bound at residue 58-61; it reads DIRS.

It belongs to the RapZ-like family.

Its function is as follows. Displays ATPase and GTPase activities. This is Nucleotide-binding protein Tlet_0523 from Pseudothermotoga lettingae (strain ATCC BAA-301 / DSM 14385 / NBRC 107922 / TMO) (Thermotoga lettingae).